We begin with the raw amino-acid sequence, 382 residues long: Carbamoyl phosphate synthase small chain (382 aa).

Positions 1–189 (MIKSALLVLE…ELPAAKNESE (189 aa)) are CPSase. L-glutamine-binding residues include Ser-47, Gly-241, and Gly-243. The Glutamine amidotransferase type-1 domain occupies 193-380 (HVVAYDYGVK…IDLIQTYRSS (188 aa)). Catalysis depends on Cys-269, which acts as the Nucleophile. 5 residues coordinate L-glutamine: Leu-270, Gln-273, Asn-311, Gly-313, and Phe-314. Active-site residues include His-353 and Glu-355.

Belongs to the CarA family. Composed of two chains; the small (or glutamine) chain promotes the hydrolysis of glutamine to ammonia, which is used by the large (or ammonia) chain to synthesize carbamoyl phosphate. Tetramer of heterodimers (alpha,beta)4.

It carries out the reaction hydrogencarbonate + L-glutamine + 2 ATP + H2O = carbamoyl phosphate + L-glutamate + 2 ADP + phosphate + 2 H(+). The catalysed reaction is L-glutamine + H2O = L-glutamate + NH4(+). It functions in the pathway amino-acid biosynthesis; L-arginine biosynthesis; carbamoyl phosphate from bicarbonate: step 1/1. Its pathway is pyrimidine metabolism; UMP biosynthesis via de novo pathway; (S)-dihydroorotate from bicarbonate: step 1/3. Small subunit of the glutamine-dependent carbamoyl phosphate synthetase (CPSase). CPSase catalyzes the formation of carbamoyl phosphate from the ammonia moiety of glutamine, carbonate, and phosphate donated by ATP, constituting the first step of 2 biosynthetic pathways, one leading to arginine and/or urea and the other to pyrimidine nucleotides. The small subunit (glutamine amidotransferase) binds and cleaves glutamine to supply the large subunit with the substrate ammonia. The protein is Carbamoyl phosphate synthase small chain of Pectobacterium atrosepticum (strain SCRI 1043 / ATCC BAA-672) (Erwinia carotovora subsp. atroseptica).